Reading from the N-terminus, the 65-residue chain is Large ribosomal subunit protein bL35 (65 aa).

Positions 1–15 (MPKMKTKKSASKRFT) are enriched in basic residues. Disordered regions lie at residues 1 to 26 (MPKM…KRGQ) and 38 to 65 (TKNK…MPYA). Residues 45–54 (RGTEGVHETN) show a composition bias toward basic and acidic residues.

Belongs to the bacterial ribosomal protein bL35 family.

The chain is Large ribosomal subunit protein bL35 from Ralstonia pickettii (strain 12J).